Consider the following 396-residue polypeptide: Elongation factor Tu (396 aa).

The 197-residue stretch at 10–206 folds into the tr-type G domain; that stretch reads KPHCNIGTIG…AVDAYIPQPE (197 aa). A G1 region spans residues 19-26; sequence GHVDHGKT. Position 19-26 (19-26) interacts with GTP; sequence GHVDHGKT. Threonine 26 contributes to the Mg(2+) binding site. The tract at residues 60–64 is G2; that stretch reads GITIS. Positions 81–84 are G3; the sequence is DCPG. GTP-binding positions include 81–85 and 136–139; these read DCPGH and NKCD. Residues 136 to 139 form a G4 region; it reads NKCD. Residues 174–176 form a G5 region; that stretch reads SAL.

This sequence belongs to the TRAFAC class translation factor GTPase superfamily. Classic translation factor GTPase family. EF-Tu/EF-1A subfamily. As to quaternary structure, monomer.

It localises to the cytoplasm. It carries out the reaction GTP + H2O = GDP + phosphate + H(+). GTP hydrolase that promotes the GTP-dependent binding of aminoacyl-tRNA to the A-site of ribosomes during protein biosynthesis. In Nitrobacter hamburgensis (strain DSM 10229 / NCIMB 13809 / X14), this protein is Elongation factor Tu.